Consider the following 792-residue polypeptide: Xaa-Pro dipeptidyl-peptidase (792 aa).

Active-site charge relay system residues include Ser363, Asp482, and His513.

Belongs to the peptidase S15 family. In terms of assembly, homodimer.

The protein localises to the cytoplasm. The catalysed reaction is Hydrolyzes Xaa-Pro-|- bonds to release unblocked, N-terminal dipeptides from substrates including Ala-Pro-|-p-nitroanilide and (sequentially) Tyr-Pro-|-Phe-Pro-|-Gly-Pro-|-Ile.. Removes N-terminal dipeptides sequentially from polypeptides having unsubstituted N-termini provided that the penultimate residue is proline. This Lactobacillus delbrueckii subsp. lactis protein is Xaa-Pro dipeptidyl-peptidase (pepX).